Reading from the N-terminus, the 149-residue chain is Calmodulin (149 aa).

The residue at position 2 (Ala2) is an N-acetylalanine. EF-hand domains lie at 8–43 (EQVS…LGQN), 44–79 (PSES…KMKD), 81–116 (DSEE…IGEK), and 117–149 (LTDD…MMQK). Ca(2+)-binding residues include Asp21, Asp23, Asp25, Gln27, Glu32, Asp57, Asp59, Asn61, Thr63, Glu68, Asp94, Asp96, Asn98, Glu105, Asp130, Asp132, Asp134, Arg136, and Glu141.

It belongs to the calmodulin family.

Its function is as follows. Calmodulin mediates the control of a large number of enzymes, ion channels and other proteins by Ca(2+). Among the enzymes to be stimulated by the calmodulin-Ca(2+) complex are a number of protein kinases and phosphatases. This Emericella nidulans (strain FGSC A4 / ATCC 38163 / CBS 112.46 / NRRL 194 / M139) (Aspergillus nidulans) protein is Calmodulin (camA).